The following is a 498-amino-acid chain: Succinate-semialdehyde dehydrogenase [NADP(+)] 1 (498 aa).

247–252 serves as a coordination point for NAD(+); sequence GSTNVG. Active-site residues include Glu269 and Cys303.

This sequence belongs to the aldehyde dehydrogenase family. As to quaternary structure, homotetramer.

Its subcellular location is the cytoplasm. It carries out the reaction succinate semialdehyde + NAD(+) + H2O = succinate + NADH + 2 H(+). The catalysed reaction is succinate semialdehyde + NADP(+) + H2O = succinate + NADPH + 2 H(+). The protein operates within amino-acid degradation; 4-aminobutanoate degradation. Catalyzes the oxidation of succinate semialdehyde to succinate. Can utilize both NAD(+) or NADP(+) as a coenzyme. Functions in a gamma-aminobutyrate (GABA) degradation pathway that allows growth utilizing GABA as a nitrogen source. Functions in the GABA shunt, which allows to bypass 2 reactions in the TCA cycle by removing alpha-ketoglutarate from the cycle and feeding succinate and NADH back into the cycle. The chain is Succinate-semialdehyde dehydrogenase [NADP(+)] 1 (ssd1) from Schizosaccharomyces pombe (strain 972 / ATCC 24843) (Fission yeast).